The chain runs to 92 residues: Small ribosomal subunit protein uS19c (92 aa).

Positions 73 to 92 are disordered; that stretch reads EFSPTRTYRGHAKKDKKAKR. Residues 80-92 show a composition bias toward basic residues; that stretch reads YRGHAKKDKKAKR.

The protein belongs to the universal ribosomal protein uS19 family.

The protein localises to the plastid. Its subcellular location is the chloroplast. Its function is as follows. Protein S19 forms a complex with S13 that binds strongly to the 16S ribosomal RNA. The sequence is that of Small ribosomal subunit protein uS19c (rps19) from Chlamydomonas reinhardtii (Chlamydomonas smithii).